Reading from the N-terminus, the 460-residue chain is Spermatogenesis-defective protein 39 homolog (460 aa).

Position 21 is a phosphothreonine (Thr-21). The segment at 70 to 101 is disordered; it reads SIKETAGSSGSTSEGREQMKGRNSFYTQLPKP. The span at 73–82 shows a compositional bias: low complexity; that stretch reads ETAGSSGSTS. Phosphothreonine is present on Thr-115. Phosphoserine is present on residues Ser-119, Ser-122, and Ser-128. Positions 121 to 133 are enriched in polar residues; the sequence is QSLSDALSDTPAK. The interval 121 to 141 is disordered; it reads QSLSDALSDTPAKTYSPELGR. A Phosphothreonine modification is found at Thr-130.

It belongs to the SPE39 family. In terms of assembly, interacts with VPS33B. Associates with the homotypic fusion and vacuole protein sorting (HOPS) complex; impaired by VPS33B. Interacts with RAB11A.

Its subcellular location is the cytoplasm. It is found in the cytoplasmic vesicle. It localises to the early endosome. The protein resides in the recycling endosome. The protein localises to the late endosome. In terms of biological role, proposed to be involved in endosomal maturation implicating in part VPS33B. In epithelial cells, the VPS33B:VIPAS39 complex may play a role in the apical RAB11A-dependent recycling pathway and in the maintenance of the apical-basolateral polarity. May play a role in lysosomal trafficking, probably via association with the core HOPS complex in a discrete population of endosomes; the functions seems to be independent of VPS33B. May play a role in vesicular trafficking during spermatogenesis. May be involved in direct or indirect transcriptional regulation of E-cadherin. The sequence is that of Spermatogenesis-defective protein 39 homolog (Vipas39) from Rattus norvegicus (Rat).